The primary structure comprises 656 residues: MGDNRWLKNSFVYLIILVAALALFFQYLGPGASQTEEKGIADVIADAQAGLVREIQAQAGDEQIIVTYNDGKKYRSRLESADSVMRLLADYGVPLRNEQGQRTINVIVQPAPAWGGLLSIFTILLPTLLLIGFFVFFMRQAQGSNNQAMSFGKSRARMFAGDKPTITFADVAGQEEAKQDLAEIVEFLKFPDKFAALGARIPRGVLMVGPPGTGKTLLSRAVAGEAGVPFFSISGSEFVEMFVGVGASRVRDLFDQAKRNAPCIVFIDEIDAVGRQRGAGLGGSHDEREQTLNQILVEMDGFDTNTNVIVIAATNRPDVLDPALVRPGRFDRQVVLDAPDVRGRIEILKVHVKGKPLAEDVNLEILARQTPGFSGADLMNVVNEAAILAARRSKRKISMAEFQDAVERVAIGGPERRSRVMTDRQKLVVAYHEAGHAIVGAALPKADKVQKVTIIPRGQAGGYTLFLPDEDSLNLRTVSQFKARLAVSLGGRVAEEIVFGNEEVTTGASGDLVQVTRIARAMVTRYGMSQRLGPIVFGEKEELIFLGREISEQRNYGDEVARQIDEEVHAIVSEAYETAQQILLQNRAVLDDMANALIEYETLDGEQLEELIRRVKPLTLDFSKSGSTTPNGRTEDRPAQPDAPQMGLGGPSPLPA.

The Cytoplasmic segment spans residues 1-10 (MGDNRWLKNS). Residues 11–31 (FVYLIILVAALALFFQYLGPG) traverse the membrane as a helical segment. Over 32–116 (ASQTEEKGIA…IVQPAPAWGG (85 aa)) the chain is Extracellular. Residues 117-137 (LLSIFTILLPTLLLIGFFVFF) form a helical membrane-spanning segment. Residues 138 to 656 (MRQAQGSNNQ…GLGGPSPLPA (519 aa)) are Cytoplasmic-facing. An ATP-binding site is contributed by 209 to 216 (GPPGTGKT). A Zn(2+)-binding site is contributed by His-432. Residue Glu-433 is part of the active site. Residues His-436 and Asp-511 each contribute to the Zn(2+) site. The segment covering 622–632 (FSKSGSTTPNG) has biased composition (polar residues). Residues 622–656 (FSKSGSTTPNGRTEDRPAQPDAPQMGLGGPSPLPA) are disordered.

It in the central section; belongs to the AAA ATPase family. The protein in the C-terminal section; belongs to the peptidase M41 family. As to quaternary structure, homohexamer. It depends on Zn(2+) as a cofactor.

It localises to the cell membrane. Acts as a processive, ATP-dependent zinc metallopeptidase for both cytoplasmic and membrane proteins. Plays a role in the quality control of integral membrane proteins. This Chloroflexus aggregans (strain MD-66 / DSM 9485) protein is ATP-dependent zinc metalloprotease FtsH.